The following is a 266-amino-acid chain: Glucosamine-6-phosphate deaminase (266 aa).

The active-site Proton acceptor; for enolization step is Asp-72. The active-site For ring-opening step is Asp-141. The active-site Proton acceptor; for ring-opening step is His-143. Glu-148 serves as the catalytic For ring-opening step.

Belongs to the glucosamine/galactosamine-6-phosphate isomerase family. NagB subfamily. As to quaternary structure, homohexamer; trimer of disulfide-linked dimers.

The enzyme catalyses alpha-D-glucosamine 6-phosphate + H2O = beta-D-fructose 6-phosphate + NH4(+). It functions in the pathway amino-sugar metabolism; N-acetylneuraminate degradation; D-fructose 6-phosphate from N-acetylneuraminate: step 5/5. Allosterically activated by N-acetylglucosamine 6-phosphate (GlcNAc6P). Catalyzes the reversible isomerization-deamination of glucosamine 6-phosphate (GlcN6P) to form fructose 6-phosphate (Fru6P) and ammonium ion. The chain is Glucosamine-6-phosphate deaminase from Vibrio parahaemolyticus serotype O3:K6 (strain RIMD 2210633).